A 161-amino-acid chain; its full sequence is PHD finger-containing protein 4 (161 aa).

A PHD-type zinc finger spans residues 30-80; the sequence is KKPCEVCGSNANDHAIMTCFLCRDTREHIYCARVHLRSVPRMWICEECRMN. Zn(2+) is bound by residues Cys-33, Cys-36, Cys-48, Cys-51, His-57, Cys-60, Cys-74, and Cys-77. The segment covering 114–132 has biased composition (polar residues); it reads TMTSSDSGNQISATHQQPP. The segment at 114-161 is disordered; it reads TMTSSDSGNQISATHQQPPQAHASPVAVPMDTSSSDNQQPPSDSESAI. Over residues 146–161 the composition is skewed to low complexity; the sequence is SSSDNQQPPSDSESAI.

In terms of assembly, interacts directly with AIPP3/BDT1.

In terms of biological role, together with AIPP3/BDT1, cooperates to form a BAH-PHD bivalent histone reader complex able to read histone H3 lysine 27 trimethylation (H3K27me3) histone marks in order to regulate transcription, especially to prevent early flowering; promotes AIPP3/BDT1 binding to H3K27me3. This Arabidopsis thaliana (Mouse-ear cress) protein is PHD finger-containing protein 4.